The primary structure comprises 395 residues: Multidrug resistance protein MdtL (395 aa).

12 helical membrane passes run 4–24, 42–62, 69–89, 93–113, 131–151, 158–178, 217–237, 247–267, 271–291, 295–315, 328–350, and 355–377; these read FLLCSFALVLLYPAGIDMYLV, IAFSVYLAGMATAMLFAGKIA, PVAIVGAIVFMMASLLCSRAS, LFLSGRFLQGIGAGGCYVVAF, LLNGITCIVPVLAPVVGHLIM, SLFYTMSAMGIIVGLLSLFIL, VSVILTFVNASPVLLMEVMGF, ALTAGVSMVVSFSTPFALGLF, TLMLVSQGLFLTAGVTLSLAH, VTLFGLTLICAGFSVGFGVAM, VASSTLGIAQVCGSSLWIWLAAI, and AMNMLIGILIGCSIVSILLIFSV.

Belongs to the major facilitator superfamily. DHA1 family. MdtL (TC 2.A.1.2.22) subfamily.

It localises to the cell inner membrane. This chain is Multidrug resistance protein MdtL, found in Salmonella dublin (strain CT_02021853).